The following is a 563-amino-acid chain: TSET complex member tstC (563 aa).

Disordered stretches follow at residues 146–170 (SPHQPPHYNTHHHTSTPSVAPSFIT), 192–213 (NSLSNSISNSNSNNNNNNNNDS), 235–298 (VLNS…NYNN), 376–395 (HPNAGKEAKEKEKEKENEFK), and 428–563 (GSAS…FLNF). The span at 379–395 (AGKEAKEKEKEKENEFK) shows a compositional bias: basic and acidic residues. A compositionally biased stretch (low complexity) spans 428–459 (GSASSKSSPSTSPLSSSYNPSSPETSENSFSA). The span at 460-473 (TPISDSNSLKNSID) shows a compositional bias: polar residues. 2 stretches are compositionally biased toward low complexity: residues 474–487 (NNNNNNNNNNNNNN) and 507–543 (NNSKSSLSTSNSNISTPDNGASSPLASSTSGSASSAA). Residues 552 to 563 (NSAKTKMNFLNF) are compositionally biased toward polar residues.

As to quaternary structure, component of the TSET complex, a heterohexamer composed of tstA, tstB, tstC, tstD, tstE and tstF, which may act in plasma membrane turnover. tstA, tstB, tstC and tstD are likely to be the core complex members with tstE and tstF acting as associated scaffold proteins.

This Dictyostelium discoideum (Social amoeba) protein is TSET complex member tstC.